The sequence spans 136 residues: MSLIVYFSSRSENTHRFVQRLGLPAVRIPLNEREHLQVDEPYILIVPSYGGGGTAGAVPRQAICFLNDVHNRQLIRGVIAAGNRNFGDAWGRAGEVIAQKCAVPYLYRFELMGTPDDIDNVRKGVSEFWQRQPQNV.

This sequence belongs to the NrdI family.

Probably involved in ribonucleotide reductase function. This chain is Protein NrdI, found in Klebsiella pneumoniae (strain 342).